The chain runs to 202 residues: MGHYVSLFITSVFIENMALAYFLGMCTFLAVSKKVSTAIGLGVAVIVVMSITVPLNNLLFQFILKNGALAWAGFPDIDLSFLGLLSYIALIAATVQILEMFLDKFVPSLYNALGVFLPLITVNCAIMGGVLFMVERDYNFTESLTYGVGAGFGWALAIALLAGIREKLKYSDVPAPLRGLGITFITVGLMSLGFMSFGGMSI.

Helical transmembrane passes span Val5 to Met25, Val35 to Leu55, Phe81 to Phe101, Gly114 to Val134, Leu144 to Ile164, and Leu180 to Met200.

The protein belongs to the NqrDE/RnfAE family. As to quaternary structure, composed of six subunits; NqrA, NqrB, NqrC, NqrD, NqrE and NqrF.

It localises to the cell inner membrane. It catalyses the reaction a ubiquinone + n Na(+)(in) + NADH + H(+) = a ubiquinol + n Na(+)(out) + NAD(+). In terms of biological role, NQR complex catalyzes the reduction of ubiquinone-1 to ubiquinol by two successive reactions, coupled with the transport of Na(+) ions from the cytoplasm to the periplasm. NqrA to NqrE are probably involved in the second step, the conversion of ubisemiquinone to ubiquinol. This chain is Na(+)-translocating NADH-quinone reductase subunit E, found in Psychrobacter sp. (strain PRwf-1).